The primary structure comprises 401 residues: Probable trafficking protein particle complex subunit 13 homolog (401 aa).

Belongs to the TRAPPC13 family.

In Caenorhabditis elegans, this protein is Probable trafficking protein particle complex subunit 13 homolog.